A 374-amino-acid polypeptide reads, in one-letter code: Ribosomal RNA large subunit methyltransferase G (374 aa).

The protein belongs to the methyltransferase superfamily. RlmG family.

The protein resides in the cytoplasm. The catalysed reaction is guanosine(1835) in 23S rRNA + S-adenosyl-L-methionine = N(2)-methylguanosine(1835) in 23S rRNA + S-adenosyl-L-homocysteine + H(+). Functionally, specifically methylates the guanine in position 1835 (m2G1835) of 23S rRNA. The chain is Ribosomal RNA large subunit methyltransferase G from Ectopseudomonas mendocina (strain ymp) (Pseudomonas mendocina).